The chain runs to 174 residues: Recombination protein RecR (174 aa).

The C4-type zinc finger occupies 30–45 (CNACRTFTEEEECTIC). The Toprim domain maps to 54 to 149 (GQLCIVEMPE…KVTRIAHGIP (96 aa)).

This sequence belongs to the RecR family.

Its function is as follows. May play a role in DNA repair. It seems to be involved in an RecBC-independent recombinational process of DNA repair. It may act with RecF and RecO. This chain is Recombination protein RecR, found in Haemophilus ducreyi (strain 35000HP / ATCC 700724).